The following is a 336-amino-acid chain: Large ribosomal subunit protein uL10 (336 aa).

The tract at residues 292–336 (LKEKLSSRAAAPAPEEKEEEVEEEAEEEEEEEEEDAAAGLGALFG) is disordered. Residues 307 to 327 (EKEEEVEEEAEEEEEEEEEDA) show a composition bias toward acidic residues.

It belongs to the universal ribosomal protein uL10 family. Part of the 50S ribosomal subunit. Forms part of the ribosomal stalk which helps the ribosome interact with GTP-bound translation factors. Forms a heptameric L10(L12)2(L12)2(L12)2 complex, where L10 forms an elongated spine to which the L12 dimers bind in a sequential fashion.

Its function is as follows. Forms part of the ribosomal stalk, playing a central role in the interaction of the ribosome with GTP-bound translation factors. The chain is Large ribosomal subunit protein uL10 from Methanothermobacter thermautotrophicus (strain ATCC 29096 / DSM 1053 / JCM 10044 / NBRC 100330 / Delta H) (Methanobacterium thermoautotrophicum).